Consider the following 1219-residue polypeptide: Myosin-5 (1219 aa).

Over residues 1 to 12 the composition is skewed to basic residues; sequence MAILKRGARKKV. The tract at residues 1–20 is disordered; the sequence is MAILKRGARKKVHQEPAKRS. Positions 36–715 constitute a Myosin motor domain; sequence VGVSDLTLLS…TLFALEHMRD (680 aa). 129–136 contacts ATP; sequence GESGAGKT. The residue at position 357 (S357) is a Phosphoserine. Y359 is modified (phosphotyrosine). Positions 404–486 are actin-binding; the sequence is SIGILDIYGF…PGIFAAMNDS (83 aa). IQ domains are found at residues 719-739 and 740-765; these read HNMAARIQRAWRRFLQRRIDA and ATKIQRTIRERKEGNKYEKLRDYGTK. One can recognise a TH1 domain in the interval 771–961; it reads KERRSMSLLG…TISVRRGNPP (191 aa). S777 bears the Phosphoserine mark. Polar residues predominate over residues 951-964; the sequence is STISVRRGNPPNSQ. Disordered regions lie at residues 951–1106 and 1139–1167; these read STIS…SELP and TAYMKPHSGNNNIPTPPQNRDVPKPVLNS. Positions 974–984 are enriched in low complexity; sequence SISSGYHASSS. S992 is modified (phosphoserine). Residues 1030 to 1041 show a composition bias toward polar residues; that stretch reads NPASTLTASQSN. Residues 1048 to 1063 are compositionally biased toward low complexity; that stretch reads TAATRATPAATPAAAA. A compositionally biased stretch (pro residues) spans 1072 to 1083; it reads IPPPPPPPPPSS. In terms of domain architecture, SH3 spans 1085 to 1147; the sequence is PKEPMFEAAY…PTAYMKPHSG (63 aa). Position 1205 is a phosphoserine (S1205).

It belongs to the TRAFAC class myosin-kinesin ATPase superfamily. Myosin family. In terms of assembly, interacts (via myosin motor domain) with SHE4; this interaction is important for proper localization and may regulate the interaction of the motor domain with actin. Interacts (via SH3 domain) with VRP1; this interaction is required for localization to sites of polarized growth and may regulate the interaction of the tail domain with actin. Interacts (via SH3 domain) with PAN1; this interaction is important for late stages of endocytopsis. Interacts (via SH3 domain) with BBC1 and LAS17. Interacts (via C-terminal acidic tail) with ARC19 and ARC40; ARC19 and ARC40 are Arp2/3 complex subunits. Interacts with BZZ1, PKH1, PKH2, YPK1 and YPK2. Post-translationally, phosphorylation of the TEDS site (Ser-357) is required for the polarization of the actin cytoskeleton and for ligand-induced, but not for constitutive internalization of STE2. Phosphorylation probably activates the myosin-I ATPase activity. Ser-357 is phosphorylated by YPK2 in vitro.

The protein localises to the cytoplasm. The protein resides in the cytoskeleton. Its subcellular location is the actin patch. One of two redundant type-I myosins implicated in the organization of the actin cytoskeleton. Required for proper actin cytoskeleton polarization and for the internalization step in endocytosis. At the cell cortex, assembles in patch-like structures together with proteins from the actin-polymerizing machinery and promotes actin assembly. Functions redundantly with LAS17 as actin nucleation-promoting factor (NPF) for the Arp2/3 complex. Motor domain phosphorylation by PAK kinases CLA4 and STE20 promotes CDC42-regulated actin assembly. Functions together with the NPF PAN1 in late stages of endocytosis. Motor domain phosphorylation by PDK1 kinases PKH1 and PKH2, and by SGK kinases YPK1 and YPK2, promotes ligand-induced, but not constitutive endocytosis of the G protein-coupled receptor STE2. The chain is Myosin-5 (MYO5) from Saccharomyces cerevisiae (strain YJM789) (Baker's yeast).